Reading from the N-terminus, the 21-residue chain is CLGIGSCNDFAGCGYAVVCFW.

The 3-cysteinyl-aspartic acid (Cys-Asp) cross-link spans 1–9 (CLGIGSCND). Intrachain disulfides connect Cys-1/Cys-13 and Cys-7/Cys-19.

Its function is as follows. Active against HIV-1 virus in vitro. The sequence is that of Tricyclic peptide RP 71955 from Streptomyces sp. (strain SP9440).